The chain runs to 620 residues: Chaperone protein HscA homolog (620 aa).

It belongs to the heat shock protein 70 family.

Chaperone involved in the maturation of iron-sulfur cluster-containing proteins. Has a low intrinsic ATPase activity which is markedly stimulated by HscB. This Shewanella oneidensis (strain ATCC 700550 / JCM 31522 / CIP 106686 / LMG 19005 / NCIMB 14063 / MR-1) protein is Chaperone protein HscA homolog.